We begin with the raw amino-acid sequence, 108 residues long: Small ribosomal subunit protein uS10 (108 aa).

It belongs to the universal ribosomal protein uS10 family. As to quaternary structure, part of the 30S ribosomal subunit.

Its function is as follows. Involved in the binding of tRNA to the ribosomes. The sequence is that of Small ribosomal subunit protein uS10 from Mycoplasma pneumoniae (strain ATCC 29342 / M129 / Subtype 1) (Mycoplasmoides pneumoniae).